A 194-amino-acid chain; its full sequence is MFEYMKGMIVEAQIDKIIVEVNGIGYRINSSINSASQVKIGQVSTLFTHFVLREDEAHLYGFVDKEELAMFKKLISVSKIGPKVAAGILSTYTPQRLGAYIVSNDAQAIAKSPGVGKKTAERMILELKDKIDDSQVEYDQNFFNHENKNNNEVVDALMALGYTKHEGEQAASAVRDTSLSTEEMIRKALNWLAR.

The tract at residues 1–63 (MFEYMKGMIV…EDEAHLYGFV (63 aa)) is domain I. The segment at 64–142 (DKEELAMFKK…DSQVEYDQNF (79 aa)) is domain II. The tract at residues 143-146 (FNHE) is flexible linker. A domain III region spans residues 146–194 (ENKNNNEVVDALMALGYTKHEGEQAASAVRDTSLSTEEMIRKALNWLAR).

Belongs to the RuvA family. As to quaternary structure, homotetramer. Forms an RuvA(8)-RuvB(12)-Holliday junction (HJ) complex. HJ DNA is sandwiched between 2 RuvA tetramers; dsDNA enters through RuvA and exits via RuvB. An RuvB hexamer assembles on each DNA strand where it exits the tetramer. Each RuvB hexamer is contacted by two RuvA subunits (via domain III) on 2 adjacent RuvB subunits; this complex drives branch migration. In the full resolvosome a probable DNA-RuvA(4)-RuvB(12)-RuvC(2) complex forms which resolves the HJ.

It localises to the cytoplasm. Its function is as follows. The RuvA-RuvB-RuvC complex processes Holliday junction (HJ) DNA during genetic recombination and DNA repair, while the RuvA-RuvB complex plays an important role in the rescue of blocked DNA replication forks via replication fork reversal (RFR). RuvA specifically binds to HJ cruciform DNA, conferring on it an open structure. The RuvB hexamer acts as an ATP-dependent pump, pulling dsDNA into and through the RuvAB complex. HJ branch migration allows RuvC to scan DNA until it finds its consensus sequence, where it cleaves and resolves the cruciform DNA. The polypeptide is Holliday junction branch migration complex subunit RuvA (Alkaliphilus metalliredigens (strain QYMF)).